Here is a 690-residue protein sequence, read N- to C-terminus: Translation factor GUF1, mitochondrial (690 aa).

A disordered region spans residues 40 to 68; sequence SVTVPAARRHNSTKSTNSTTSTNSTTATS. A compositionally biased stretch (low complexity) spans 52 to 68; sequence TKSTNSTTSTNSTTATS. Residues 89–272 enclose the tr-type G domain; that stretch reads ERYRNFCIVA…AVIKKMPAPV (184 aa). Residues 98–105, 165–169, and 219–222 contribute to the GTP site; these read AHIDHGKS, DTPGH, and NKID.

This sequence belongs to the TRAFAC class translation factor GTPase superfamily. Classic translation factor GTPase family. LepA subfamily.

Its subcellular location is the mitochondrion inner membrane. The catalysed reaction is GTP + H2O = GDP + phosphate + H(+). Its function is as follows. Promotes mitochondrial protein synthesis. May act as a fidelity factor of the translation reaction, by catalyzing a one-codon backward translocation of tRNAs on improperly translocated ribosomes. Binds to mitochondrial ribosomes in a GTP-dependent manner. This chain is Translation factor GUF1, mitochondrial, found in Sordaria macrospora (strain ATCC MYA-333 / DSM 997 / K(L3346) / K-hell).